The sequence spans 701 residues: F-box/LRR-repeat protein 17 (701 aa).

The span at Met1–Asn11 shows a compositional bias: basic and acidic residues. 3 disordered regions span residues Met1–Cys20, Ala72–Ala94, and Gly227–Cys300. The span at Gly227–Ala237 shows a compositional bias: gly residues. Pro residues predominate over residues Glu252–Ser264. The region spanning Thr318–Leu365 is the F-box domain.

This sequence belongs to the FBXL17 family. As to quaternary structure, part of the SCF (SKP1-CUL1-F-box) E3 ubiquitin-protein ligase complex SCF(FBXL17) composed of CUL1, SKP1, RBX1 and FBXL17. Interacts with BTB domain-containing proteins such as KLHL12, BCL6 and BACH1; specifically recognizes and binds a conserved degron of non-consecutive residues present at the interface of BTB dimers of aberrant composition. Interacts with SUFU. Interacts with PRMT1.

The protein localises to the cytoplasm. It localises to the nucleus. Substrate-recognition component of the SCF(FBXL17) E3 ubiquitin ligase complex, a key component of a quality control pathway required to ensure functional dimerization of BTB domain-containing proteins (dimerization quality control, DQC). FBXL17 specifically recognizes and binds a conserved degron of non-consecutive residues present at the interface of BTB dimers of aberrant composition: aberrant BTB dimer are then ubiquitinated by the SCF(FBXL17) complex and degraded by the proteasome. The ability of the SCF(FBXL17) complex to eliminate compromised BTB dimers is required for the differentiation and survival of neural crest and neuronal cells. The SCF(FBXL17) complex mediates ubiquitination and degradation of BACH1. The SCF(FBXL17) complex is also involved in the regulation of the hedgehog/smoothened (Hh) signaling pathway by mediating the ubiquitination and degradation of SUFU, allowing the release of GLI1 from SUFU for proper Hh signal transduction. The SCF(FBXL17) complex mediates ubiquitination and degradation of PRMT1. This is F-box/LRR-repeat protein 17 from Homo sapiens (Human).